The primary structure comprises 239 residues: Fatty acid metabolism regulator protein (239 aa).

One can recognise an HTH gntR-type domain in the interval 6–74; that stretch reads QSPAGFAEEY…HGKPTKVNNF (69 aa). The H-T-H motif DNA-binding region spans 34–53; that stretch reads ERELSELIGVTRTTLREVLQ.

Homodimer.

Its subcellular location is the cytoplasm. Multifunctional regulator of fatty acid metabolism. Represses transcription of at least eight genes required for fatty acid transport and beta-oxidation including fadA, fadB, fadD, fadL and fadE. Activates transcription of at least three genes required for unsaturated fatty acid biosynthesis: fabA, fabB and iclR, the gene encoding the transcriptional regulator of the aceBAK operon encoding the glyoxylate shunt enzymes. Binding of FadR is specifically inhibited by long chain fatty acyl-CoA compounds. This chain is Fatty acid metabolism regulator protein, found in Salmonella typhimurium (strain LT2 / SGSC1412 / ATCC 700720).